The sequence spans 610 residues: UvrABC system protein C (610 aa).

Residues 16–94 enclose the GIY-YIG domain; that stretch reads SQPGVYRMYD…IQRYQPRYNV (79 aa). Positions 204–239 constitute a UVR domain; it reads SQVIEGLIKRMEEASQALRFEEAARIRDQIHAVRQV.

Belongs to the UvrC family. Interacts with UvrB in an incision complex.

It is found in the cytoplasm. The UvrABC repair system catalyzes the recognition and processing of DNA lesions. UvrC both incises the 5' and 3' sides of the lesion. The N-terminal half is responsible for the 3' incision and the C-terminal half is responsible for the 5' incision. This chain is UvrABC system protein C, found in Proteus mirabilis (strain HI4320).